A 1098-amino-acid polypeptide reads, in one-letter code: MEDSPQGLKRSRDPDQDQDDDSGEAGKADGSGGENQERSSDQIELDDDDFQETRPKPKRSRTHPPQQNLIEVVKGNGDLISKAVKIWVERYEDSPSLATTELLSMLFQACGAKYSIKDDLLDETDVDDVVVSLVNLARAGELEDYQSSRKKELKNFKENLVSFWNNLIIECQNGPLFDRVLFDKCMDYIIALSCTPPRVYRQTATLMGLQLVTSFISVANTLGSQRETTQRQLNAESKKRADGPRVDSLNKRLSVTHEQITTLEDMMRKIFTGLFVHRYRDIDNDIRMSCIQSLGIWILSYPSLFLQDLYLKYLGWTLNDKNAGVRKASLLALQKLYEMDENVPTLGLFTQRFSNRMIEMADDVDMSAAVCAIGLVKQLLRHQLIPDDDLGPLYDLLIDQPQEIRRAIGELVYDHLIAQKFNSSPSSLTGHDDSSSEIHIFRMLQILREFSTDPILCVYVIDDVWEYMKAMKDWKCIISMLLDQNPRTGSTTDEDSTNLIRLLFVSIRKAVGEKIIPSTDNRKQYHSKAQREIFENNRKDITVAMMKNYPQLLRKFMADKAKVSSLVEIIIFMKLELYSLKRQEQSFKAAVRLIKDAFFKHGEKEALRSCVKAITFCASESKGELQDFSRGKLKDLEDELLDKITSAIREVKDGNDEYSLLVNLKRLYELQLSKPVLVESMFDEIALTLHNFRNLDEEVICFLLLNMHMYLAWYLHSIINCEAISEASLSSLISKRDTLFEELSYFLNGIEESKKYGNQLSNRICAILAETWCLFRKSNYDSGKLERLGYCPDSVFLEKFWKLCAEMFNTSDETDEEDENKEYIEETNRDVSVIAACKLVASDVVPKDYLGPEIISHLGMHGPGVTGIIKNLITFLRKKEDDISNIYLESLKRAYHRYSSELSSGREESRVDKCLEEWRELAGGLSGMYIGAARNKYRLEILSVVKEGVEFAFRDAPKQLLFLEVAILPFATRLSVSDIIDIKKDVQGRIVHVNTDEDPSGWRPCFTFLETLEEKCLKNEDLQDDKEAANVRRRGRPRKRPETERKRLFDEQSGSDEDESISGGSDREDKLDEDAPLIETIRSAARRKALKGERSKGH.

The disordered stretch occupies residues 1–68 (MEDSPQGLKR…RSRTHPPQQN (68 aa)). Residues 245-265 (RVDSLNKRLSVTHEQITTLED) adopt a coiled-coil conformation. The SCD domain maps to 275-360 (FVHRYRDIDN…QRFSNRMIEM (86 aa)). Coiled-coil stretches lie at residues 632-653 (KLKD…EVKD), 888-908 (LESL…GREE), and 1009-1032 (LETL…ANVR). The tract at residues 1027–1077 (EAANVRRRGRPRKRPETERKRLFDEQSGSDEDESISGGSDREDKLDEDAPL) is disordered. Basic and acidic residues predominate over residues 1040-1050 (RPETERKRLFD).

It belongs to the SCC3 family. As to quaternary structure, part of the cohesin complex. Interacts with DEK3. Expressed in roots, mature leaves, buds and seedlings.

Its subcellular location is the nucleus. It localises to the chromosome. Its function is as follows. Essential component of cohesin complex, a complex required for the cohesion of sister chromatids after DNA replication. The cohesin complex apparently forms a large proteinaceous ring within which sister chromatids can be trapped. At anaphase, the complex is cleaved and dissociates from chromatin, allowing sister chromatids to segregate. The cohesin complex may also play a role in spindle pole assembly during mitosis. Required for centromere cohesion maintenance at anaphase I and for the monopolar orientation of the kinetochores during both male and female meiosis. Also involved in mitosis. The protein is Sister-chromatid cohesion protein 3 of Arabidopsis thaliana (Mouse-ear cress).